The primary structure comprises 452 residues: Netrin-5 (452 aa).

Residues 1-34 form the signal peptide; the sequence is MTDYRTLFSSPGAGSTVTTPITLSLLLLLSQATS. Intrachain disulfides connect cysteine 173–cysteine 182, cysteine 175–cysteine 191, cysteine 193–cysteine 202, cysteine 205–cysteine 225, cysteine 228–cysteine 240, cysteine 230–cysteine 247, cysteine 249–cysteine 258, cysteine 261–cysteine 275, cysteine 298–cysteine 376, cysteine 302–cysteine 378, and cysteine 317–cysteine 438. Laminin EGF-like domains follow at residues 173 to 227 and 228 to 277; these read CQCH…PCLP and CQCH…PCQR. An NTR domain is found at 298-438; the sequence is CQGYCNVSVS…LQQKERGGAC (141 aa). The N-linked (GlcNAc...) asparagine glycan is linked to asparagine 303.

The protein localises to the secreted. Functionally, plays a role in neurogenesis. Prevents motor neuron cell body migration out of the neural tube. This is Netrin-5 (Ntn5) from Mus musculus (Mouse).